We begin with the raw amino-acid sequence, 450 residues long: Sulfide:quinone oxidoreductase, mitochondrial (450 aa).

Residues 53-54 (SG), E75, Q83, and V118 each bind FAD. The residue at position 173 (K173) is an N6-acetyllysine. Residue C201 is the Cysteine persulfide intermediate of the active site. An intrachain disulfide couples C201 to C379. D336 lines the FAD pocket. The residue at position 343 (S343) is a Phosphoserine. 344 to 347 (KTAA) serves as a coordination point for FAD. C379 acts as the Cysteine persulfide intermediate in catalysis.

Belongs to the SQRD family. FAD is required as a cofactor.

The protein localises to the mitochondrion. The catalysed reaction is ubiquinone-10 + hydrogen sulfide + sulfite + 2 H(+) = ubiquinol-10 + thiosulfate. It carries out the reaction a quinone + hydrogen sulfide + glutathione + H(+) = S-sulfanylglutathione + a quinol. The enzyme catalyses ubiquinone-10 + hydrogen sulfide + glutathione + H(+) = S-sulfanylglutathione + ubiquinol-10. In terms of biological role, catalyzes the oxidation of hydrogen sulfide with the help of a quinone, such as ubiquinone-10, giving rise to thiosulfate and ultimately to sulfane (molecular sulfur) atoms. Requires an additional electron acceptor; can use sulfite, sulfide or cyanide (in vitro). It is believed the in vivo electron acceptor is glutathione. This chain is Sulfide:quinone oxidoreductase, mitochondrial, found in Homo sapiens (Human).